We begin with the raw amino-acid sequence, 208 residues long: Uracil phosphoribosyltransferase (208 aa).

Residues R78, R103, and 130-138 (DPMLATGGS) contribute to the 5-phospho-alpha-D-ribose 1-diphosphate site. Residues I193 and 198 to 200 (GDA) each bind uracil. D199 lines the 5-phospho-alpha-D-ribose 1-diphosphate pocket.

Belongs to the UPRTase family. The cofactor is Mg(2+).

It catalyses the reaction UMP + diphosphate = 5-phospho-alpha-D-ribose 1-diphosphate + uracil. It participates in pyrimidine metabolism; UMP biosynthesis via salvage pathway; UMP from uracil: step 1/1. Its activity is regulated as follows. Allosterically activated by GTP. Functionally, catalyzes the conversion of uracil and 5-phospho-alpha-D-ribose 1-diphosphate (PRPP) to UMP and diphosphate. This is Uracil phosphoribosyltransferase from Shewanella halifaxensis (strain HAW-EB4).